The sequence spans 119 residues: NAD(P)H-quinone oxidoreductase subunit M (119 aa).

The protein belongs to the complex I NdhM subunit family. In terms of assembly, NDH-1 can be composed of about 15 different subunits; different subcomplexes with different compositions have been identified which probably have different functions.

It localises to the cellular thylakoid membrane. It catalyses the reaction a plastoquinone + NADH + (n+1) H(+)(in) = a plastoquinol + NAD(+) + n H(+)(out). It carries out the reaction a plastoquinone + NADPH + (n+1) H(+)(in) = a plastoquinol + NADP(+) + n H(+)(out). In terms of biological role, NDH-1 shuttles electrons from an unknown electron donor, via FMN and iron-sulfur (Fe-S) centers, to quinones in the respiratory and/or the photosynthetic chain. The immediate electron acceptor for the enzyme in this species is believed to be plastoquinone. Couples the redox reaction to proton translocation, and thus conserves the redox energy in a proton gradient. Cyanobacterial NDH-1 also plays a role in inorganic carbon-concentration. This is NAD(P)H-quinone oxidoreductase subunit M from Crocosphaera subtropica (strain ATCC 51142 / BH68) (Cyanothece sp. (strain ATCC 51142)).